The following is a 387-amino-acid chain: Cytochrome b (387 aa).

The next 4 helical transmembrane spans lie at 32–52, 76–98, 113–133, and 179–199; these read FGSL…TLAM, WLVR…LHIG, VWAI…LGYV, and FFAL…MHLI. Positions 82 and 96 each coordinate heme b. Heme b-binding residues include H183 and H197. A ubiquinone is bound at residue H202. The next 4 helical transmembrane spans lie at 226 to 246, 290 to 310, 322 to 342, and 349 to 369; these read YLFK…SFVF, LLGV…PITD, LSKF…KLGA, and FIEL…IIVP.

Belongs to the cytochrome b family. Fungal cytochrome b-c1 complex contains 10 subunits; 3 respiratory subunits, 2 core proteins and 5 low-molecular weight proteins. Cytochrome b-c1 complex is a homodimer. It depends on heme b as a cofactor.

The protein resides in the mitochondrion inner membrane. Component of the ubiquinol-cytochrome c reductase complex (complex III or cytochrome b-c1 complex) that is part of the mitochondrial respiratory chain. The b-c1 complex mediates electron transfer from ubiquinol to cytochrome c. Contributes to the generation of a proton gradient across the mitochondrial membrane that is then used for ATP synthesis. The chain is Cytochrome b (COB) from Podospora anserina (strain S / ATCC MYA-4624 / DSM 980 / FGSC 10383) (Pleurage anserina).